The primary structure comprises 138 residues: NADH-quinone oxidoreductase subunit A 1 (138 aa).

3 helical membrane passes run 19–39 (FLPLALYTVAATVLIGVLLLA), 74–94 (FYLIAIFFIVFDVEAAFIFAW), and 103–123 (LAGLIHITFFIVILLLGLVWL).

The protein belongs to the complex I subunit 3 family. NDH-1 is composed of 14 different subunits. Subunits NuoA, H, J, K, L, M, N constitute the membrane sector of the complex.

It is found in the cell inner membrane. The catalysed reaction is a quinone + NADH + 5 H(+)(in) = a quinol + NAD(+) + 4 H(+)(out). In terms of biological role, NDH-1 shuttles electrons from NADH, via FMN and iron-sulfur (Fe-S) centers, to quinones in the respiratory chain. The immediate electron acceptor for the enzyme in this species is believed to be ubiquinone. Couples the redox reaction to proton translocation (for every two electrons transferred, four hydrogen ions are translocated across the cytoplasmic membrane), and thus conserves the redox energy in a proton gradient. The sequence is that of NADH-quinone oxidoreductase subunit A 1 from Geobacter metallireducens (strain ATCC 53774 / DSM 7210 / GS-15).